The chain runs to 212 residues: Uridine kinase (212 aa).

Residue 13-20 (GASASGKS) participates in ATP binding.

Belongs to the uridine kinase family.

Its subcellular location is the cytoplasm. It catalyses the reaction uridine + ATP = UMP + ADP + H(+). The catalysed reaction is cytidine + ATP = CMP + ADP + H(+). Its pathway is pyrimidine metabolism; CTP biosynthesis via salvage pathway; CTP from cytidine: step 1/3. It functions in the pathway pyrimidine metabolism; UMP biosynthesis via salvage pathway; UMP from uridine: step 1/1. This Shewanella halifaxensis (strain HAW-EB4) protein is Uridine kinase.